Here is a 274-residue protein sequence, read N- to C-terminus: PTS system sorbose-specific EIID component (274 aa).

Residues 4–273 form the PTS EIID domain; sequence KKITQGDLVS…GIIGNALGFL (270 aa). The next 6 membrane-spanning stretches (helical) occupy residues 61–81, 99–119, 126–146, 186–206, 226–246, and 253–273; these read LVFF…TAAM, IKVG…WGTL, LGAS…FFIF, ILGL…NVPL, ILDQ…MVRL, and PVWL…LGFL.

It localises to the cell inner membrane. Its function is as follows. The phosphoenolpyruvate-dependent sugar phosphotransferase system (PTS), a major carbohydrate active transport system, catalyzes the phosphorylation of incoming sugar substrates concomitant with their translocation across the cell membrane. The enzyme II SorABFM PTS system is involved in sorbose transport. The chain is PTS system sorbose-specific EIID component from Klebsiella pneumoniae.